Here is a 408-residue protein sequence, read N- to C-terminus: Myb/SANT-like DNA-binding domain-containing protein 4 (408 aa).

In terms of domain architecture, Myb-like spans 4-77; the sequence is LKRKRKSNFS…EVKRRYLDWR (74 aa). A coiled-coil region spans residues 236-367; the sequence is HLLVTLEKQK…IEKERLQDAL (132 aa).

This is Myb/SANT-like DNA-binding domain-containing protein 4 (msantd4) from Xenopus tropicalis (Western clawed frog).